The chain runs to 173 residues: Ribosome maturation factor RimM (173 aa).

The PRC barrel domain maps to 92–165 (EDEYYHTDLI…RVVVALPQEI (74 aa)).

Belongs to the RimM family. In terms of assembly, binds ribosomal protein uS19.

The protein resides in the cytoplasm. Functionally, an accessory protein needed during the final step in the assembly of 30S ribosomal subunit, possibly for assembly of the head region. Essential for efficient processing of 16S rRNA. May be needed both before and after RbfA during the maturation of 16S rRNA. It has affinity for free ribosomal 30S subunits but not for 70S ribosomes. This Bradyrhizobium diazoefficiens (strain JCM 10833 / BCRC 13528 / IAM 13628 / NBRC 14792 / USDA 110) protein is Ribosome maturation factor RimM.